The following is a 329-amino-acid chain: Ubiquinol oxidase 1c, mitochondrial (329 aa).

Residues 1–45 (MITTLLRRSLLDASKQATSINGILFHQLAPAKYFRVPAVGGLRDF) constitute a mitochondrion transit peptide. A helical membrane pass occupies residues 154 to 174 (AIMLETVAAVPGMVGGMLMHF). Positions 158, 197, and 200 each coordinate Fe cation. Residues 216 to 236 (ALVISVQGVFFNAYLIGYIIS) traverse the membrane as a helical segment. 3 residues coordinate Fe cation: Glu-248, Glu-299, and His-302.

This sequence belongs to the alternative oxidase family. As to quaternary structure, homodimer; disulfide-linked. The cofactor is Fe cation. Expressed in roots, stems, leaves, cotyledons and flowers. High expression in stamens.

It localises to the mitochondrion inner membrane. The catalysed reaction is 2 a ubiquinol + O2 = 2 a ubiquinone + 2 H2O. In terms of biological role, catalyzes the cyanide-resistant oxidation of ubiquinol and the reduction of molecular oxygen to water, but does not translocate protons and consequently is not linked to oxidative phosphorylation. May increase respiration when the cytochrome respiratory pathway is restricted, or in response to low temperatures. In Arabidopsis thaliana (Mouse-ear cress), this protein is Ubiquinol oxidase 1c, mitochondrial (AOX1C).